The primary structure comprises 392 residues: Major outer membrane protein P.IA (392 aa).

An N-terminal signal peptide occupies residues 1 to 19 (MRKKLTALVLSALPLAAVA).

The protein belongs to the Gram-negative porin family. As to quaternary structure, homotrimer.

It localises to the cell outer membrane. Serves as a slightly cation selective porin. Major antigen on the gonococcal cell surface and it may have pathogenic properties in addition to its porin activity. This is Major outer membrane protein P.IA (porA) from Neisseria meningitidis serogroup B (strain ATCC BAA-335 / MC58).